The primary structure comprises 322 residues: Malate dehydrogenase (322 aa).

Residues 10–15 and Asp34 each bind NAD(+); that span reads GSGQIG. Residues Arg83 and Arg89 each coordinate substrate. NAD(+) contacts are provided by residues Asn96 and 119-121; that span reads ITN. Substrate is bound by residues Asn121 and Arg152. The Proton acceptor role is filled by His176.

This sequence belongs to the LDH/MDH superfamily. MDH type 3 family.

The enzyme catalyses (S)-malate + NAD(+) = oxaloacetate + NADH + H(+). Functionally, catalyzes the reversible oxidation of malate to oxaloacetate. This chain is Malate dehydrogenase, found in Bradyrhizobium sp. (strain BTAi1 / ATCC BAA-1182).